A 919-amino-acid polypeptide reads, in one-letter code: Calcium-transporting ATPase type 2C member 1 (919 aa).

The Cytoplasmic segment spans residues 1-70; it reads MKVARFQKIP…NEFDISEDEP (70 aa). The helical transmembrane segment at 71 to 91 threads the bilayer; the sequence is LWKKYISQFKNPLIMLLLASA. At 92–104 the chain is on the lumenal side; the sequence is VISVLMHQFDDAV. A helical membrane pass occupies residues 105 to 123; it reads SITVAILIVVTVAFVQEYR. The Cytoplasmic segment spans residues 124-262; that stretch reads SEKSLEELSK…APKTPLQKSM (139 aa). The helical transmembrane segment at 263 to 282 threads the bilayer; the sequence is DLLGKQLSFYSFGIIGIIML. Residues 283-294 are Lumenal-facing; it reads VGWLLGKDILEM. Residues 295 to 312 traverse the membrane as a helical segment; sequence FTISVSLAVAAIPEGLPI. Residues Val-303, Ala-304, Ile-306, and Glu-308 each coordinate Ca(2+). Residues 313–699 are Cytoplasmic-facing; sequence VVTVTLALGV…EEGKGIYNNI (387 aa). Asp-350 serves as the catalytic 4-aspartylphosphate intermediate. Asp-644 and Asp-648 together coordinate Mg(2+). The helical transmembrane segment at 700-719 threads the bilayer; that stretch reads KNFVRFQLSTSIAALTLISL. Topologically, residues 720–729 are lumenal; the sequence is ATLMNFPNPL. A helical membrane pass occupies residues 730–750; the sequence is NAMQILWINIIMDGPPAQSLG. 2 residues coordinate Ca(2+): Asn-738 and Asp-742. At 751–770 the chain is on the cytoplasmic side; sequence VEPVDKDVIRKPPRNWKDSI. Residues 771–793 traverse the membrane as a helical segment; it reads LTKNLILKILVSSIIIVCGTLFV. The Lumenal segment spans residues 794–808; it reads FWRELRDNVITPRDT. The helical transmembrane segment at 809-828 threads the bilayer; the sequence is TMTFTCFVFFDMFNALSSRS. The Cytoplasmic portion of the chain corresponds to 829–841; that stretch reads QTKSVFEIGLCSN. The chain crosses the membrane as a helical span at residues 842-860; that stretch reads RMFCYAVLGSIMGQLLVIY. The Lumenal segment spans residues 861–875; the sequence is FPPLQKVFQTESLSI. A helical membrane pass occupies residues 876 to 896; the sequence is LDLLFLLGLTSSVCIVAEIIK. Residues 897 to 919 lie on the Cytoplasmic side of the membrane; that stretch reads KVERSREKIQKHVSSTSSSFLEV.

It belongs to the cation transport ATPase (P-type) (TC 3.A.3) family. Type IIA subfamily. Monomer. Homodimer. As to expression, found in most tissues except colon, thymus, spleen and leukocytes. Expressed in keratinocytes (at protein level).

It is found in the golgi apparatus. It localises to the trans-Golgi network membrane. The protein resides in the golgi stack membrane. It catalyses the reaction Ca(2+)(in) + ATP + H2O = Ca(2+)(out) + ADP + phosphate + H(+). The enzyme catalyses Mn(2+)(in) + ATP + H2O = Mn(2+)(out) + ADP + phosphate + H(+). Functionally, ATP-driven pump that supplies the Golgi apparatus with Ca(2+) and Mn(2+) ions, both essential cofactors for processing and trafficking of newly synthesized proteins in the secretory pathway. Within a catalytic cycle, acquires Ca(2+) or Mn(2+) ions on the cytoplasmic side of the membrane and delivers them to the lumenal side. The transfer of ions across the membrane is coupled to ATP hydrolysis and is associated with a transient phosphorylation that shifts the pump conformation from inward-facing to outward-facing state. Plays a primary role in the maintenance of Ca(2+) homeostasis in the trans-Golgi compartment with a functional impact on Golgi and post-Golgi protein sorting as well as a structural impact on cisternae morphology. Responsible for loading the Golgi stores with Ca(2+) ions in keratinocytes, contributing to keratinocyte differentiation and epidermis integrity. Participates in Ca(2+) and Mn(2+) ions uptake into the Golgi store of hippocampal neurons and regulates protein trafficking required for neural polarity. May also play a role in the maintenance of Ca(2+) and Mn(2+) homeostasis and signaling in the cytosol while preventing cytotoxicity. This Homo sapiens (Human) protein is Calcium-transporting ATPase type 2C member 1.